A 610-amino-acid chain; its full sequence is Anthocyanin regulatory Lc protein (610 aa).

2 disordered regions span residues 402–422 and 468–524; these read ATGA…MSER and LESS…PVLT. Residues 412–461 enclose the bHLH domain; the sequence is TGTKNHVMSERKRREKLNEMFLVLKSLLPSIHRVNKASILAETIAYLKEL. The span at 481-495 shows a compositional bias: polar residues; sequence TTTRLITRPSRGNNE. The span at 508–519 shows a compositional bias: basic and acidic residues; it reads KSPELGRDDVER.

It belongs to the bHLH protein family. In terms of assembly, efficient DNA binding requires dimerization with another bHLH protein.

It localises to the nucleus. In terms of biological role, putative transcriptional activator. Controls tissue-specific synthesis of anthocyanin pigments in various parts of the maize plant. The chain is Anthocyanin regulatory Lc protein (LC) from Zea mays (Maize).